The sequence spans 428 residues: Histidine--tRNA ligase (428 aa).

This sequence belongs to the class-II aminoacyl-tRNA synthetase family. Homodimer.

The protein resides in the cytoplasm. It catalyses the reaction tRNA(His) + L-histidine + ATP = L-histidyl-tRNA(His) + AMP + diphosphate + H(+). The sequence is that of Histidine--tRNA ligase from Mesomycoplasma hyopneumoniae (strain 7448) (Mycoplasma hyopneumoniae).